We begin with the raw amino-acid sequence, 819 residues long: Protein SCARECROW (819 aa).

Disordered regions lie at residues 6 to 49 (LFNG…HSER), 65 to 136 (HNNN…INNN), 212 to 231 (SQNNQTNRTNNNSSNNRNNT), and 393 to 420 (PLSTQQDQQHQLQQHPEDLAPATTTTTT). Over residues 15 to 33 (TTPDETNNNSTSNSSNIST) the composition is skewed to low complexity. Polar residues predominate over residues 79–98 (RTNNTSSLNCSLPATTQKGV). Over residues 99–136 (TTTTTTTLASSGNNNNNNNNNNNYHYHNNNNNSIINNN) the composition is skewed to low complexity. A coiled-coil region spans residues 418 to 448 (TTTSAELALARKKKEEIKEQKKKDEEGLHLL). Positions 438-806 (KKKDEEGLHL…LCLLTASAWR (369 aa)) constitute a GRAS domain. Positions 445–507 (LHLLTLLLQC…RLVSSCLGIY (63 aa)) are leucine repeat I (LRI). Residues 452 to 456 (LQCAE) carry the LxCxE motif motif. The tract at residues 526 to 591 (FQVFNGISPF…GGPPYVRLTG (66 aa)) is VHIID. Residues 557–561 (VHIID) carry the VHIID motif. The segment at 601–633 (ATGKRLSDFANKLGLPFEFFPVAEKVGNIDVEK) is leucine repeat II (LRII). A PFYRE region spans residues 642–729 (VAVHWLQHSL…QQLLSREIRN (88 aa)). The SAW stretch occupies residues 732–806 (AVGGPSRSGE…LCLLTASAWR (75 aa)).

It belongs to the GRAS family. As to expression, expressed in shoot apical meristem, leaf primordia, between the cortex and the differentiating vessels in lower shoots and in root endodermis.

Its subcellular location is the nucleus. Functionally, putative transcription factor involved in asymmetric cell division. The protein is Protein SCARECROW (SCR) of Pisum sativum (Garden pea).